The sequence spans 312 residues: Pimeloyl-[acyl-carrier protein] methyl ester esterase (312 aa).

The region spanning 17–241 (VYLIHGWGAN…KAAHAPFLSH (225 aa)) is the AB hydrolase-1 domain. Residues Trp-23, 83 to 84 (SL), and 145 to 149 (FLQLQ) each bind substrate. Catalysis depends on Ser-83, which acts as the Nucleophile. Residues Asp-207 and His-235 contribute to the active site. His-235 provides a ligand contact to substrate.

Belongs to the AB hydrolase superfamily. Carboxylesterase BioH family. Monomer.

The protein resides in the cytoplasm. The catalysed reaction is 6-carboxyhexanoyl-[ACP] methyl ester + H2O = 6-carboxyhexanoyl-[ACP] + methanol + H(+). It participates in cofactor biosynthesis; biotin biosynthesis. Its function is as follows. The physiological role of BioH is to remove the methyl group introduced by BioC when the pimeloyl moiety is complete. It allows to synthesize pimeloyl-ACP via the fatty acid synthetic pathway through the hydrolysis of the ester bonds of pimeloyl-ACP esters. The chain is Pimeloyl-[acyl-carrier protein] methyl ester esterase from Neisseria meningitidis serogroup A / serotype 4A (strain DSM 15465 / Z2491).